Consider the following 260-residue polypeptide: Small ribosomal subunit protein uS2 (260 aa).

Residues 223–260 (EGRQGEDEEEASQEVAEGVSKDSLEDLKKSVEEGSNEE) are disordered. Positions 241–254 (VSKDSLEDLKKSVE) are enriched in basic and acidic residues.

This sequence belongs to the universal ribosomal protein uS2 family.

This Pediococcus pentosaceus (strain ATCC 25745 / CCUG 21536 / LMG 10740 / 183-1w) protein is Small ribosomal subunit protein uS2.